Consider the following 432-residue polypeptide: UDP-N-acetylmuramate--L-alanine ligase (432 aa).

An ATP-binding site is contributed by 108–114 (GAHGKTS).

It belongs to the MurCDEF family.

The protein localises to the cytoplasm. It carries out the reaction UDP-N-acetyl-alpha-D-muramate + L-alanine + ATP = UDP-N-acetyl-alpha-D-muramoyl-L-alanine + ADP + phosphate + H(+). It functions in the pathway cell wall biogenesis; peptidoglycan biosynthesis. In terms of biological role, cell wall formation. In Bacillus velezensis (strain DSM 23117 / BGSC 10A6 / LMG 26770 / FZB42) (Bacillus amyloliquefaciens subsp. plantarum), this protein is UDP-N-acetylmuramate--L-alanine ligase.